The sequence spans 449 residues: Phosphoglucosamine mutase (449 aa).

Catalysis depends on Ser-100, which acts as the Phosphoserine intermediate. Positions 100, 241, 243, and 245 each coordinate Mg(2+). At Ser-100 the chain carries Phosphoserine.

The protein belongs to the phosphohexose mutase family. It depends on Mg(2+) as a cofactor. Activated by phosphorylation.

It carries out the reaction alpha-D-glucosamine 1-phosphate = D-glucosamine 6-phosphate. Functionally, catalyzes the conversion of glucosamine-6-phosphate to glucosamine-1-phosphate. In Clostridium kluyveri (strain NBRC 12016), this protein is Phosphoglucosamine mutase.